The chain runs to 314 residues: Porphobilinogen deaminase (314 aa).

S-(dipyrrolylmethanemethyl)cysteine is present on Cys-241.

Belongs to the HMBS family. As to quaternary structure, monomer. It depends on dipyrromethane as a cofactor.

It catalyses the reaction 4 porphobilinogen + H2O = hydroxymethylbilane + 4 NH4(+). It functions in the pathway porphyrin-containing compound metabolism; protoporphyrin-IX biosynthesis; coproporphyrinogen-III from 5-aminolevulinate: step 2/4. It participates in porphyrin-containing compound metabolism; chlorophyll biosynthesis. Tetrapolymerization of the monopyrrole PBG into the hydroxymethylbilane pre-uroporphyrinogen in several discrete steps. The chain is Porphobilinogen deaminase from Chloroherpeton thalassium (strain ATCC 35110 / GB-78).